A 461-amino-acid chain; its full sequence is Phenolic glucoside malonyltransferase 1 (461 aa).

Residue H167 is the Proton acceptor of the active site. Positions 167–171 (HAAQD) match the HXXXD motif motif. Residue 281-282 (ST) participates in malonyl-CoA binding. Residue D400 is the Proton acceptor of the active site. Residues 400–404 (DFGWG) carry the DFGWG motif motif.

Belongs to the plant acyltransferase family. Phenolic glucoside malonyltransferase subfamily. As to expression, expressed in all tissues. Most highly expressed in the abdomen and especially in the gut.

The catalysed reaction is a flavonol 3-O-beta-D-glucoside + malonyl-CoA = a flavonol 3-O-(6-O-malonyl-beta-D-glucoside) + CoA. It carries out the reaction kaempferol 3-O-beta-D-glucoside + malonyl-CoA = kaempferol 3-O-(6-O-malonyl-beta-D-glucoside) + CoA. The enzyme catalyses quercetin 3-O-beta-D-glucoside + malonyl-CoA = quercetin 3-O-(6-O-malonyl-beta-D-glucoside) + CoA. It catalyses the reaction a flavonol 7-O-beta-D-glucoside + malonyl-CoA = a flavonol 7-O-(6-O-malonyl-beta-D-glucoside) + CoA. The catalysed reaction is (2S)-naringenin 7-O-beta-D-glucoside + malonyl-CoA = (2S)-naringenin 7-O-(6-O-malonyl-beta-D-glucoside) + CoA. It carries out the reaction kaempferol 7-O-beta-D-glucoside + malonyl-CoA = kaempferol 7-O-(6-O-malonyl-beta-D-glucoside) + CoA. The enzyme catalyses apigenin 7-O-beta-D-glucoside + malonyl-CoA = apigenin 7-O-(6-O-malonyl-beta-D-glucoside) + CoA. It catalyses the reaction rhaponticin + malonyl-CoA = 6-O-malonyl-rhaponticin + CoA. Phenolic glucoside malonyltransferase that neutralizes phenolic glycosides in host plants. Catalyzes the transfer of a malonyl group from malonyl-CoA to the phenolic glycosides, leading to their detoxification. Phenolic glycosides, which are among the most abundant plant secondary metabolites, act as plant defense compounds: they strongly affect growth, development and behavior of insect herbivores. Has malonyltransferase activity against flavonoids kaempferol 3-O-glucoside, kaempferol 7-O-glucoside, isoquercetin (quercetin 3-O-beta-D-glucopyranoside), apigetrin (apigenin 7-O-beta-D-glucoside) and prunin (naringenin 7-O-beta-D-glucoside). Also has activity toward non-flavonoid rhaponticin, but with lower efficiency. The protein is Phenolic glucoside malonyltransferase 1 of Bemisia tabaci (Sweetpotato whitefly).